The primary structure comprises 472 residues: Na(+)/H(+) antiporter NhaA 1 (472 aa).

11 consecutive transmembrane segments (helical) span residues 34 to 54 (TASITLLLAAIAAMVIANSQW), 86 to 106 (GLMVLFFFLLGLEIKYECLVG), 116 to 136 (LVIAMAIGGMLLPAGIYAGVA), 146 to 166 (GWGIPMATDTAFALGILALLG), 175 to 195 (VTLSALAIVDDMGAVAVIGLF), 203 to 223 (TSLMYAGLTLGGLFALNVLGF), 227 to 247 (IFYLVGGILLWWFVLQSGVHA), 324 to 344 (PVSLIILPIFAFINAGVALPD), 353 to 373 (VVFIGVASAMVLGKVIGISVF), 394 to 414 (VFALACLAGVGFTMSLFIASL), and 428 to 448 (LGILAGSVIAAIIGTTLFLMI).

Belongs to the NhaA Na(+)/H(+) (TC 2.A.33) antiporter family.

Its subcellular location is the cell inner membrane. It catalyses the reaction Na(+)(in) + 2 H(+)(out) = Na(+)(out) + 2 H(+)(in). In terms of biological role, na(+)/H(+) antiporter that extrudes sodium in exchange for external protons. In Pseudoalteromonas atlantica (strain T6c / ATCC BAA-1087), this protein is Na(+)/H(+) antiporter NhaA 1.